The chain runs to 368 residues: MQSSLARPLRPPVLAGCGGRRGHGAPRGSVSVARCRAEAAPPTVGTASRAPAGPYTGRDPEVKKPAWLRQRAAQGDKYARLRESIGELKLNTVCVEAQCPNIGECWNGGGGAGGEGDGIATATIMVLGDTCTRGCRFCAVKTSNKPPPPDPLEPLNTALAVASWGVDYVVLTSVDRDDLPDGGSSHFAQTVRALKELKPGILVECLTSDFRGDLEAVSSLANSGLDVYAHNIETVRSLQRIVRDPRAGYDQSLAVLKHAKDCREGMITKSSIMLGLGETDEEVKQAMIDLRAIGVDILTLGQYLQPTERHLTVREYVTPEKFQFWKEYGESVGFRYVASGPLVRSSYRAGELFVQNLVRNNKTGSSSS.

Disordered stretches follow at residues 1-30 (MQSSLARPLRPPVLAGCGGRRGHGAPRGSV) and 42-61 (PTVGTASRAPAGPYTGRDPE). Residues cysteine 94, cysteine 99, cysteine 105, cysteine 131, cysteine 135, cysteine 138, and serine 346 each coordinate [4Fe-4S] cluster. One can recognise a Radical SAM core domain in the interval 114-335 (GEGDGIATAT…KEYGESVGFR (222 aa)).

This sequence belongs to the radical SAM superfamily. Lipoyl synthase family. [4Fe-4S] cluster is required as a cofactor.

Its subcellular location is the plastid. It is found in the chloroplast. The catalysed reaction is [[Fe-S] cluster scaffold protein carrying a second [4Fe-4S](2+) cluster] + N(6)-octanoyl-L-lysyl-[protein] + 2 oxidized [2Fe-2S]-[ferredoxin] + 2 S-adenosyl-L-methionine + 4 H(+) = [[Fe-S] cluster scaffold protein] + N(6)-[(R)-dihydrolipoyl]-L-lysyl-[protein] + 4 Fe(3+) + 2 hydrogen sulfide + 2 5'-deoxyadenosine + 2 L-methionine + 2 reduced [2Fe-2S]-[ferredoxin]. It functions in the pathway protein modification; protein lipoylation via endogenous pathway; protein N(6)-(lipoyl)lysine from octanoyl-[acyl-carrier-protein]: step 2/2. Functionally, catalyzes the radical-mediated insertion of two sulfur atoms into the C-6 and C-8 positions of the octanoyl moiety bound to the lipoyl domains of lipoate-dependent enzymes, thereby converting the octanoylated domains into lipoylated derivatives. This is Lipoyl synthase, chloroplastic from Sorghum bicolor (Sorghum).